A 535-amino-acid chain; its full sequence is Dimethylaniline monooxygenase [N-oxide-forming] 2 (535 aa).

Residues 9–13, Glu-32, 40–41, and 61–62 each bind FAD; these read GAGVS, LW, and NT. NADP(+) contacts are provided by residues 60 to 61 and 195 to 198; these read TN and SAAD. Lys-492 is covalently cross-linked (Glycyl lysine isopeptide (Lys-Gly) (interchain with G-Cter in SUMO)). Residues 510–530 form a helical membrane-spanning segment; that stretch reads APVSFLIKVLGLLAIVLAFFF.

This sequence belongs to the FMO family. Requires FAD as cofactor. The cofactor is Mg(2+).

The protein resides in the microsome membrane. The protein localises to the endoplasmic reticulum membrane. In terms of biological role, catalyzes the oxidative metabolism of numerous xenobiotics, including mainly therapeutic drugs and insecticides that contain a soft nucleophile, most commonly nitrogen and sulfur and participates to their bioactivation. This chain is Dimethylaniline monooxygenase [N-oxide-forming] 2, found in Rattus norvegicus (Rat).